A 343-amino-acid polypeptide reads, in one-letter code: Ribosomal RNA small subunit methyltransferase C (343 aa).

The protein belongs to the methyltransferase superfamily. RsmC family. Monomer.

The protein resides in the cytoplasm. It catalyses the reaction guanosine(1207) in 16S rRNA + S-adenosyl-L-methionine = N(2)-methylguanosine(1207) in 16S rRNA + S-adenosyl-L-homocysteine + H(+). Functionally, specifically methylates the guanine in position 1207 of 16S rRNA in the 30S particle. The sequence is that of Ribosomal RNA small subunit methyltransferase C from Escherichia coli O6:K15:H31 (strain 536 / UPEC).